We begin with the raw amino-acid sequence, 213 residues long: Octanoyltransferase (213 aa).

The region spanning 32 to 207 is the BPL/LPL catalytic domain; it reads ESTLDEIWLV…NILALLNNPD (176 aa). Substrate-binding positions include 71 to 78, 138 to 140, and 151 to 153; these read RGGQVTYH, SLG, and GLA. Cys169 functions as the Acyl-thioester intermediate in the catalytic mechanism.

The protein belongs to the LipB family.

Its subcellular location is the cytoplasm. The catalysed reaction is octanoyl-[ACP] + L-lysyl-[protein] = N(6)-octanoyl-L-lysyl-[protein] + holo-[ACP] + H(+). Its pathway is protein modification; protein lipoylation via endogenous pathway; protein N(6)-(lipoyl)lysine from octanoyl-[acyl-carrier-protein]: step 1/2. Catalyzes the transfer of endogenously produced octanoic acid from octanoyl-acyl-carrier-protein onto the lipoyl domains of lipoate-dependent enzymes. Lipoyl-ACP can also act as a substrate although octanoyl-ACP is likely to be the physiological substrate. The sequence is that of Octanoyltransferase from Escherichia coli O17:K52:H18 (strain UMN026 / ExPEC).